The sequence spans 312 residues: GDSL esterase/lipase At2g38180 (312 aa).

The first 22 residues, 1-22 (MVGPVRPQIVLFGSSIVQYSFT), serve as a signal peptide directing secretion. A glycan (N-linked (GlcNAc...) asparagine) is linked at N79. The interval 285–312 (EPPHPVSLCDHELTQNEQLEPPQPTARL) is disordered.

Belongs to the 'GDSL' lipolytic enzyme family.

Its subcellular location is the secreted. The protein is GDSL esterase/lipase At2g38180 of Arabidopsis thaliana (Mouse-ear cress).